Here is a 322-residue protein sequence, read N- to C-terminus: tRNA U34 carboxymethyltransferase (322 aa).

Residues lysine 91, tryptophan 105, lysine 110, glycine 129, 179 to 180, methionine 195, tyrosine 199, and arginine 314 each bind carboxy-S-adenosyl-L-methionine; that span reads LE.

The protein belongs to the class I-like SAM-binding methyltransferase superfamily. CmoB family. In terms of assembly, homotetramer.

The catalysed reaction is carboxy-S-adenosyl-L-methionine + 5-hydroxyuridine(34) in tRNA = 5-carboxymethoxyuridine(34) in tRNA + S-adenosyl-L-homocysteine + H(+). In terms of biological role, catalyzes carboxymethyl transfer from carboxy-S-adenosyl-L-methionine (Cx-SAM) to 5-hydroxyuridine (ho5U) to form 5-carboxymethoxyuridine (cmo5U) at position 34 in tRNAs. The polypeptide is tRNA U34 carboxymethyltransferase (Pseudomonas aeruginosa (strain LESB58)).